We begin with the raw amino-acid sequence, 257 residues long: UPF0246 protein Shewana3_3143 (257 aa).

Belongs to the UPF0246 family.

The polypeptide is UPF0246 protein Shewana3_3143 (Shewanella sp. (strain ANA-3)).